Consider the following 986-residue polypeptide: Ephrin type-A receptor 4 (986 aa).

An N-terminal signal peptide occupies residues 1–19; it reads MAGVPVGALLPLLVGVCGA. Residues 20 to 547 lie on the Extracellular side of the membrane; it reads VTGSRVYPAN…PIIGDGTNPT (528 aa). The Eph LBD domain maps to 30 to 209; it reads EVTLLDSRSV…FYKKCPLTVR (180 aa). Asn-235, Asn-340, and Asn-408 each carry an N-linked (GlcNAc...) asparagine glycan. Fibronectin type-III domains lie at 328-439 and 440-537; these read PPSA…TNQA and APSP…TVPS. The helical transmembrane segment at 548–569 threads the bilayer; it reads VLLVSVAGSVVLVVILIAAFVI. Residues 570-986 are Cytoplasmic-facing; that stretch reads SRRRSKYSKA…QQMHGRMVPV (417 aa). Phosphotyrosine; by autocatalysis occurs at positions 596 and 602. Residues 621-882 form the Protein kinase domain; the sequence is IKIEKVIGVG…QIVNMLDKLI (262 aa). ATP contacts are provided by residues 627 to 635 and Lys-653; that span reads IGVGEFGEV. Residue Asp-746 is the Proton acceptor of the active site. Residues Tyr-779 and Tyr-928 each carry the phosphotyrosine; by autocatalysis modification. Positions 911–975 constitute an SAM domain; it reads SAVVSVSDWL…LSSVQAMRSQ (65 aa). Residues 984–986 carry the PDZ-binding motif; that stretch reads VPV.

Belongs to the protein kinase superfamily. Tyr protein kinase family. Ephrin receptor subfamily. As to quaternary structure, interacts with the src family kinase, p59-Fyn, through the major phosphorylation site at position Tyr-602. Interacts (via PDZ motif) with SIPA1L1 (via PDZ domain); controls neuronal morphology through regulation of the RAP1 (RAP1A or RAP1B) and RAP2 (RAP2A, RAP2B or RAP2C) GTPases. In terms of tissue distribution, expressed at high levels in brain, with expression also detected in the kidney, lung, muscle and thymus.

It localises to the cell membrane. The protein localises to the early endosome. The catalysed reaction is L-tyrosyl-[protein] + ATP = O-phospho-L-tyrosyl-[protein] + ADP + H(+). Functionally, receptor tyrosine kinase which binds membrane-bound ephrin family ligands residing on adjacent cells, leading to contact-dependent bidirectional signaling into neighboring cells. The signaling pathway downstream of the receptor is referred to as forward signaling while the signaling pathway downstream of the ephrin ligand is referred to as reverse signaling. Highly promiscuous, it has the unique property among Eph receptors to bind and to be physiologically activated by both GPI-anchored ephrin-A and transmembrane ephrin-B ligands including EFNA1 and EFNB3. Upon activation by ephrin ligands, modulates cell morphology and integrin-dependent cell adhesion through regulation of the Rac, Rap and Rho GTPases activity. Plays an important role in the development of the nervous system controlling different steps of axonal guidance including the establishment of the corticospinal projections. The sequence is that of Ephrin type-A receptor 4 (EPHA4) from Gallus gallus (Chicken).